A 438-amino-acid polypeptide reads, in one-letter code: Malic acid transport protein (438 aa).

A run of 10 helical transmembrane segments spans residues 37–57 (SWFA…SFPF), 65–85 (IGKI…SCML), 106–126 (LFIA…AIYA), 140–160 (ILYY…FFTI), 172–192 (SPAW…AGAV), 205–225 (VIFG…LFAV), 242–262 (PGMF…INIA), 288–308 (FMAI…MVSF), 321–341 (ACGW…TIEI), and 353–373 (FGHI…YLMV). Positions 390–438 (AHPPPKPNTGVLNPTFPPEKAPASLEKVDTHVTSTGGESDPPSSEHESV) are disordered. 6 positions are modified to phosphoserine: serine 413, serine 423, serine 428, serine 432, serine 433, and serine 437.

The protein belongs to the tellurite-resistance/dicarboxylate transporter (TDT) family.

The protein localises to the membrane. In terms of biological role, permease for malate and other C4 dicarboxylic acids. The chain is Malic acid transport protein (mae1) from Schizosaccharomyces pombe (strain 972 / ATCC 24843) (Fission yeast).